The sequence spans 504 residues: L-carnitine/gamma-butyrobetaine antiporter (504 aa).

12 consecutive transmembrane segments (helical) span residues 10 to 30 (IEPK…WLTV), 51 to 71 (WGWA…WLVF), 92 to 112 (IFMM…SIEI), 143 to 163 (GPLP…FFFV), 195 to 215 (FYLV…TPLV), 231 to 251 (LDAI…ACGL), 263 to 283 (SYLS…SFIM), 316 to 336 (WTVF…IFLA), 347 to 367 (LCFG…TVLG), 398 to 418 (WAAL…CFIA), 446 to 466 (LLVR…LLAL), and 475 to 495 (AIIA…LSFI).

This sequence belongs to the BCCT transporter (TC 2.A.15) family. CaiT subfamily. In terms of assembly, homotrimer.

Its subcellular location is the cell inner membrane. The catalysed reaction is 4-(trimethylamino)butanoate(in) + (R)-carnitine(out) = 4-(trimethylamino)butanoate(out) + (R)-carnitine(in). It participates in amine and polyamine metabolism; carnitine metabolism. Catalyzes the exchange of L-carnitine for gamma-butyrobetaine. The chain is L-carnitine/gamma-butyrobetaine antiporter from Escherichia coli O6:K15:H31 (strain 536 / UPEC).